The sequence spans 141 residues: Hemoglobin subunit alpha-1/2 (141 aa).

The Globin domain occupies 1 to 141; it reads VLSPTDKTNV…VSTVLTSKYR (141 aa). A Phosphoserine modification is found at serine 3. Lysine 7 is subject to N6-succinyllysine. Threonine 8 is subject to Phosphothreonine. An N6-succinyllysine modification is found at lysine 11. At lysine 16 the chain carries N6-acetyllysine; alternate. Lysine 16 is modified (N6-succinyllysine; alternate). Phosphotyrosine is present on tyrosine 24. Lysine 40 is subject to N6-succinyllysine. The residue at position 49 (serine 49) is a Phosphoserine. O2 is bound at residue histidine 58. Histidine 87 lines the heme b pocket. Phosphoserine is present on serine 102. Threonine 108 is subject to Phosphothreonine. A Phosphoserine modification is found at serine 124. A phosphothreonine mark is found at threonine 134 and threonine 137. Position 138 is a phosphoserine (serine 138).

Belongs to the globin family. Heterotetramer of two alpha chains and two beta chains. In terms of tissue distribution, red blood cells.

In terms of biological role, involved in oxygen transport from the lung to the various peripheral tissues. The sequence is that of Hemoglobin subunit alpha-1/2 from Tapirus terrestris (Lowland tapir).